The chain runs to 1906 residues: A disintegrin and metalloproteinase with thrombospondin motifs 20 (1906 aa).

The first 26 residues, 1–26 (MRVAKWLTGLLCPISLLLTGSWEVRF), serve as a signal peptide directing secretion. Positions 27-249 (HPRQEALVKT…RSQLHSRNKR (223 aa)) are excised as a propeptide. N-linked (GlcNAc...) asparagine glycans are attached at residues Asn92 and Asn221. The segment at 201–222 (PCEVSENQMEKTALPSQSSRNT) is disordered. In terms of domain architecture, Peptidase M12B spans 255–464 (RYVEVMVTAD…GHGECLLDKP (210 aa)). Intrachain disulfides connect Cys330–Cys383, Cys359–Cys365, Cys377–Cys459, Cys415–Cys443, Cys486–Cys508, Cys497–Cys518, Cys503–Cys537, Cys531–Cys542, Cys565–Cys602, Cys569–Cys607, and Cys580–Cys592. His399 is a binding site for Zn(2+). Residue Glu400 is part of the active site. Zn(2+) contacts are provided by His403 and His409. Positions 465–552 (NGRTYDLSPQ…VTRDMETRPV (88 aa)) constitute a Disintegrin domain. A TSP type-1 1 domain is found at 553–608 (DGEWGPWGPYSSCSRTCGGGIKSTARLCDRPEPRNGGRYCVGRRMKFRSCNTDSCP). Residues Asn714, Asn798, and Asn805 are each glycosylated (N-linked (GlcNAc...) asparagine). The spacer stretch occupies residues 721–842 (AGVFNSAHYG…FNIPIEERSN (122 aa)). TSP type-1 domains lie at 843–901 (LFSW…MDCE), 906–962 (IIGK…GSCV), 962–1015 (VLTR…NCNE), 1017–1074 (PCPS…RACA), 1075–1131 (SWHV…APCL), 1148–1202 (RAAQ…LCFS), and 1203–1260 (PCGE…AACP). N-linked (GlcNAc...) asparagine glycosylation occurs at Asn1057. Residues 1265–1295 (RAPSSSEQPSHVPSRNVPLTHKPGENQDQGA) are disordered. Polar residues predominate over residues 1266-1277 (APSSSEQPSHVP). TSP type-1 domains follow at residues 1300–1351 (RGNQ…RHCG), 1354–1411 (PCPH…HACP), 1412–1465 (EDVS…KACR), 1468–1526 (RCPS…QDCM), 1527–1584 (RYQW…PHCK), 1585–1648 (YSVV…LRSC), and 1650–1706 (HVAT…NDCK). Asn1562 carries an N-linked (GlcNAc...) asparagine glycan. Residues 1707–1906 (LLTTCKELQV…MATGLSIQVL (200 aa)) form the GON domain. N-linked (GlcNAc...) asparagine glycans are attached at residues Asn1719, Asn1759, and Asn1777.

Zn(2+) is required as a cofactor. Post-translationally, the precursor is cleaved by a furin endopeptidase. Glycosylated. Can be O-fucosylated by POFUT2 on a serine or a threonine residue found within the consensus sequence C1-X(2)-(S/T)-C2-G of the TSP type-1 repeat domains where C1 and C2 are the first and second cysteine residue of the repeat, respectively. Fucosylated repeats can then be further glycosylated by the addition of a beta-1,3-glucose residue by the glucosyltransferase, B3GALTL. Fucosylation mediates the efficient secretion of ADAMTS family members. Can also be C-glycosylated with one or two mannose molecules on tryptophan residues within the consensus sequence W-X-X-W of the TPRs, and N-glycosylated. These other glycosylations can also facilitate secretion. Expressed at low level in testis and brain.

It localises to the secreted. Its subcellular location is the extracellular space. The protein localises to the extracellular matrix. Its function is as follows. May play a role in tissue-remodeling process occurring in both normal and pathological conditions. May have a protease-independent function in the transport from the endoplasmic reticulum to the Golgi apparatus of secretory cargos, mediated by the GON domain. This is A disintegrin and metalloproteinase with thrombospondin motifs 20 (Adamts20) from Mus musculus (Mouse).